Reading from the N-terminus, the 172-residue chain is Ribosome maturation factor RimM (172 aa).

Residues 96–168 form the PRC barrel domain; it reads EGEFYYHQII…RVDVELMEGL (73 aa).

This sequence belongs to the RimM family. As to quaternary structure, binds ribosomal protein uS19.

It is found in the cytoplasm. An accessory protein needed during the final step in the assembly of 30S ribosomal subunit, possibly for assembly of the head region. Essential for efficient processing of 16S rRNA. May be needed both before and after RbfA during the maturation of 16S rRNA. It has affinity for free ribosomal 30S subunits but not for 70S ribosomes. The protein is Ribosome maturation factor RimM of Streptococcus pyogenes serotype M6 (strain ATCC BAA-946 / MGAS10394).